Here is a 545-residue protein sequence, read N- to C-terminus: MQYIVVTGGVISGLGKGTITSSIGHILKDSGIKVSAVKIDPYINYDAGTMNPYQHGEVFVLDDGGEVDLDLGNYERFMNINLSRDNNITTGKVYLEVIQKERHGDYLGKTVQIIPHITDEIKRRIREVARTSGADVVLIEVGGTVGDIESMPFLEALRQLKREEQNVVFAHVTLVPEIGPTMEQKTKPTQHSVKALREIGIQPDIIFARSKQKLTEETKSRISLFTDVPVEGIISVSDVENVYLLPQMMVNEGLITRLSKLLNMNIEYRDSWTSYAENIRHPRDRVKVAIVGKYVDLHDAYISHKEAFSHVTGNTGIAVDIMWIDSEKVKNDQSVLSEADAILIPGGFGYRGVEGKIAATRYAMENGVPFLGICLGFQVAVIAVARYVLGLDGANSTEFDEKTKYPVVDILPEQRGVKDMGGTMRLGSKKVVIKKGTLAHRIYGADVIYERHRHRYEVNPDYIDMIEKAGFKFSATDEEGIRMEILERPGDESFIATQYHSEFKSRPLDPSKVHLHLVEQALIFKHRRMGENHEGYATAASSQGQ.

The segment at 1 to 264 (MQYIVVTGGV…ITRLSKLLNM (264 aa)) is amidoligase domain. Ser-12 is a binding site for CTP. Ser-12 serves as a coordination point for UTP. 13–18 (GLGKGT) serves as a coordination point for ATP. Residue Tyr-53 coordinates L-glutamine. An ATP-binding site is contributed by Asp-70. Mg(2+)-binding residues include Asp-70 and Glu-140. Residues 147–149 (DIE), 185–190 (KTKPTQ), and Arg-221 each bind CTP. Residues 185–190 (KTKPTQ) and Arg-221 each bind UTP. One can recognise a Glutamine amidotransferase type-1 domain in the interval 294 to 527 (YVDLHDAYIS…VEQALIFKHR (234 aa)). Gly-347 contacts L-glutamine. The active-site Nucleophile; for glutamine hydrolysis is Cys-374. L-glutamine contacts are provided by residues 375 to 378 (LGFQ), Glu-398, and Arg-455. Catalysis depends on residues His-500 and Glu-502.

Belongs to the CTP synthase family. As to quaternary structure, homotetramer.

It catalyses the reaction UTP + L-glutamine + ATP + H2O = CTP + L-glutamate + ADP + phosphate + 2 H(+). The enzyme catalyses L-glutamine + H2O = L-glutamate + NH4(+). The catalysed reaction is UTP + NH4(+) + ATP = CTP + ADP + phosphate + 2 H(+). The protein operates within pyrimidine metabolism; CTP biosynthesis via de novo pathway; CTP from UDP: step 2/2. Allosterically activated by GTP, when glutamine is the substrate; GTP has no effect on the reaction when ammonia is the substrate. The allosteric effector GTP functions by stabilizing the protein conformation that binds the tetrahedral intermediate(s) formed during glutamine hydrolysis. Inhibited by the product CTP, via allosteric rather than competitive inhibition. Its function is as follows. Catalyzes the ATP-dependent amination of UTP to CTP with either L-glutamine or ammonia as the source of nitrogen. Regulates intracellular CTP levels through interactions with the four ribonucleotide triphosphates. This chain is CTP synthase, found in Thermoplasma acidophilum (strain ATCC 25905 / DSM 1728 / JCM 9062 / NBRC 15155 / AMRC-C165).